The following is a 617-amino-acid chain: UvrABC system protein C (617 aa).

Residues Asn-22 to Ile-100 form the GIY-YIG domain. The region spanning Asp-209 to Met-244 is the UVR domain.

It belongs to the UvrC family. Interacts with UvrB in an incision complex.

It is found in the cytoplasm. Functionally, the UvrABC repair system catalyzes the recognition and processing of DNA lesions. UvrC both incises the 5' and 3' sides of the lesion. The N-terminal half is responsible for the 3' incision and the C-terminal half is responsible for the 5' incision. The chain is UvrABC system protein C from Neisseria meningitidis serogroup B (strain ATCC BAA-335 / MC58).